Reading from the N-terminus, the 345-residue chain is Aurora kinase B (345 aa).

Residues 1–25 (MAQKENAYPWPYGSKTSQSGLNTLS) are disordered. The span at 14–25 (SKTSQSGLNTLS) shows a compositional bias: polar residues. Threonine 35 is subject to Phosphothreonine. Positions 50–77 (TAAPGQKLAENKSQGSTASQGSQNKQPF) are disordered. Positions 60 to 77 (NKSQGSTASQGSQNKQPF) are enriched in polar residues. Serine 62 carries the phosphoserine modification. A Protein kinase domain is found at 82–332 (FEIGRPLGKG…LAEVAAHPWV (251 aa)). ATP contacts are provided by residues 88–96 (LGKGKFGNV) and lysine 111. The active-site Proton acceptor is the aspartate 205. At lysine 220 the chain carries N6-acetyllysine. The residue at position 232 (serine 232) is a Phosphoserine. Phosphothreonine; by autocatalysis is present on threonine 237.

The protein belongs to the protein kinase superfamily. Ser/Thr protein kinase family. Aurora subfamily. In terms of assembly, component of the chromosomal passenger complex (CPC) composed of at least BIRC5/survivin, CDCA8/borealin, INCENP, AURKB or AURKC; predominantly independent AURKB- and AURKC-containing complexes exist. Associates with RACGAP1 during M phase. Interacts with SPDYC; this interaction may be required for proper localization of active, Thr-237-phosphorylated AURKB form during prometaphase and metaphase. Interacts with p53/TP53. Interacts (via the middle kinase domain) with NOC2L (via the N- and C-terminus domains). Interacts with CDCA1. Interacts with EVI5. Interacts with JTB. Interacts with NDC80. Interacts with PSMA3. Interacts with RNF2/RING1B. Interacts with SEPTIN1. Interacts with SIRT2. Interacts with TACC1. Interacts with TTC28. The phosphorylation of Thr-237 requires the binding to INCENP and occurs by means of an autophosphorylation mechanism. Thr-237 phosphorylation is indispensable for the AURKB kinase activity. In terms of processing, acetylated at Lys-220 by KAT5 at kinetochores, increasing AURKB activity and promoting accurate chromosome segregation in mitosis. Post-translationally, ubiquitinated by different BCR (BTB-CUL3-RBX1) E3 ubiquitin ligase complexes. Ubiquitinated by the BCR(KLHL9-KLHL13) E3 ubiquitin ligase complex, ubiquitination leads to removal from mitotic chromosomes and is required for cytokinesis. During anaphase, the BCR(KLHL21) E3 ubiquitin ligase complex recruits the CPC complex from chromosomes to the spindle midzone and mediates the ubiquitination of AURKB. Ubiquitination of AURKB by BCR(KLHL21) E3 ubiquitin ligase complex may not lead to its degradation by the proteasome. Deubiquitinated by USP35; inhibiting CDH1-mediated degradation of AURKB. Expressed in testis, intestine and spleen. All of them are tissues that contain a large number of proliferating cells. Expressed during S phase, in a cell-cycle-dependent fashion.

The protein resides in the nucleus. It localises to the chromosome. It is found in the centromere. Its subcellular location is the kinetochore. The protein localises to the cytoplasm. The protein resides in the cytoskeleton. It localises to the spindle. It is found in the midbody. The enzyme catalyses L-seryl-[protein] + ATP = O-phospho-L-seryl-[protein] + ADP + H(+). It carries out the reaction L-threonyl-[protein] + ATP = O-phospho-L-threonyl-[protein] + ADP + H(+). Its activity is regulated as follows. Activity is greatly increased when AURKB is within the CPC complex. In particular, AURKB-phosphorylated INCENP acts as an activator of AURKB. Positive feedback between HASPIN and AURKB contributes to CPC localization. Its function is as follows. Serine/threonine-protein kinase component of the chromosomal passenger complex (CPC), a complex that acts as a key regulator of mitosis. The CPC complex has essential functions at the centromere in ensuring correct chromosome alignment and segregation and is required for chromatin-induced microtubule stabilization and spindle assembly. Involved in the bipolar attachment of spindle microtubules to kinetochores and is a key regulator for the onset of cytokinesis during mitosis. Required for central/midzone spindle assembly and cleavage furrow formation. Key component of the cytokinesis checkpoint, a process required to delay abscission to prevent both premature resolution of intercellular chromosome bridges and accumulation of DNA damage: phosphorylates CHMP4C, leading to retain abscission-competent VPS4 (VPS4A and/or VPS4B) at the midbody ring until abscission checkpoint signaling is terminated at late cytokinesis. AURKB phosphorylates the CPC complex subunits BIRC5/survivin, CDCA8/borealin and INCENP. Phosphorylation of INCENP leads to increased AURKB activity. Other known AURKB substrates involved in centromeric functions and mitosis are CENPA, DES/desmin, GPAF, KIF2C, NSUN2, RACGAP1, SEPTIN1, VIM/vimentin, HASPIN, and histone H3. A positive feedback loop involving HASPIN and AURKB contributes to localization of CPC to centromeres. Phosphorylation of VIM controls vimentin filament segregation in cytokinetic process, whereas histone H3 is phosphorylated at 'Ser-10' and 'Ser-28' during mitosis (H3S10ph and H3S28ph, respectively). AURKB is also required for kinetochore localization of BUB1 and SGO1. Phosphorylation of p53/TP53 negatively regulates its transcriptional activity. Key regulator of active promoters in resting B- and T-lymphocytes: acts by mediating phosphorylation of H3S28ph at active promoters in resting B-cells, inhibiting RNF2/RING1B-mediated ubiquitination of histone H2A and enhancing binding and activity of the USP16 deubiquitinase at transcribed genes. Acts as an inhibitor of CGAS during mitosis: catalyzes phosphorylation of the N-terminus of CGAS during the G2-M transition, blocking CGAS liquid phase separation and activation, and thereby preventing CGAS-induced autoimmunity. Phosphorylates KRT5 during anaphase and telophase. Phosphorylates ATXN10 which promotes phosphorylation of ATXN10 by PLK1 and may play a role in the regulation of cytokinesis and stimulating the proteasomal degradation of ATXN10. This is Aurora kinase B (Aurkb) from Mus musculus (Mouse).